A 432-amino-acid chain; its full sequence is Adenylosuccinate synthetase (432 aa).

Residues 12 to 18 (GDEGKGK) and 40 to 42 (GHT) contribute to the GTP site. The active-site Proton acceptor is the aspartate 13. Mg(2+) is bound by residues aspartate 13 and glycine 40. IMP is bound by residues 13–16 (DEGK), 38–41 (NAGH), threonine 130, arginine 144, glutamine 225, threonine 240, and arginine 304. Histidine 41 (proton donor) is an active-site residue. 300–306 (STTGRPR) is a binding site for substrate. GTP contacts are provided by residues arginine 306, 332-334 (KLD), and 414-416 (SVG).

Belongs to the adenylosuccinate synthetase family. As to quaternary structure, homodimer. The cofactor is Mg(2+).

The protein resides in the cytoplasm. It carries out the reaction IMP + L-aspartate + GTP = N(6)-(1,2-dicarboxyethyl)-AMP + GDP + phosphate + 2 H(+). Its pathway is purine metabolism; AMP biosynthesis via de novo pathway; AMP from IMP: step 1/2. In terms of biological role, plays an important role in the de novo pathway of purine nucleotide biosynthesis. Catalyzes the first committed step in the biosynthesis of AMP from IMP. In Geobacter sp. (strain M21), this protein is Adenylosuccinate synthetase.